We begin with the raw amino-acid sequence, 132 residues long: MERREDVIVGKHVYGSLYGVPREKATDEEYLRGVVVRAAESAGATVHAVNSWTIPGEKGGVSVIVLVLESHLALHTWPEYDYATFDIYTCGEHTDPWKAFELLLSELKPRKYTVHYVDRSQEKTVLEAQPRR.

The Schiff-base intermediate with substrate; via pyruvic acid role is filled by Ser70. Residue Ser70 is modified to Pyruvic acid (Ser); by autocatalysis. The active-site Proton acceptor; for processing activity is His75. Cys90 acts as the Proton donor; for catalytic activity in catalysis.

This sequence belongs to the prokaryotic AdoMetDC family. Type 1 subfamily. In terms of assembly, heterooctamer of four alpha and four beta chains arranged as a tetramer of alpha/beta heterodimers. It depends on pyruvate as a cofactor. In terms of processing, is synthesized initially as an inactive proenzyme. Formation of the active enzyme involves a self-maturation process in which the active site pyruvoyl group is generated from an internal serine residue via an autocatalytic post-translational modification. Two non-identical subunits are generated from the proenzyme in this reaction, and the pyruvate is formed at the N-terminus of the alpha chain, which is derived from the carboxyl end of the proenzyme. The post-translation cleavage follows an unusual pathway, termed non-hydrolytic serinolysis, in which the side chain hydroxyl group of the serine supplies its oxygen atom to form the C-terminus of the beta chain, while the remainder of the serine residue undergoes an oxidative deamination to produce ammonia and the pyruvoyl group blocking the N-terminus of the alpha chain.

It carries out the reaction L-arginine + H(+) = agmatine + CO2. It functions in the pathway amine and polyamine biosynthesis; agmatine biosynthesis; agmatine from L-arginine: step 1/1. Its function is as follows. Specifically catalyzes the decarboxylation of L-arginine to agmatine. Has no S-adenosylmethionine decarboxylase (AdoMetDC) activity. This is Arginine decarboxylase proenzyme from Aeropyrum pernix (strain ATCC 700893 / DSM 11879 / JCM 9820 / NBRC 100138 / K1).